A 206-amino-acid chain; its full sequence is Small ribosomal subunit protein uS4A (206 aa).

Residues 98–163 enclose the S4 RNA-binding domain; it reads MRLDNVVYRL…SERFKMFAEN (66 aa).

This sequence belongs to the universal ribosomal protein uS4 family. In terms of assembly, part of the 30S ribosomal subunit. Contacts protein S5. The interaction surface between S4 and S5 is involved in control of translational fidelity.

Its function is as follows. One of the primary rRNA binding proteins, it binds directly to 16S rRNA where it nucleates assembly of the body of the 30S subunit. Functionally, with S5 and S12 plays an important role in translational accuracy. The polypeptide is Small ribosomal subunit protein uS4A (Clostridium perfringens (strain SM101 / Type A)).